We begin with the raw amino-acid sequence, 733 residues long: tRNA (guanine(27)-N(2))-dimethyltransferase (733 aa).

Positions 1-18 (MENMAEEELLPLEKEEVE) are enriched in acidic residues. Residues 1–78 (MENMAEEELL…LASAPEEAKS (78 aa)) are disordered. At Thr-26 the chain carries Phosphothreonine. Low complexity-rich tracts occupy residues 39–49 (PDSALDSAPTP) and 57–73 (PALAQAPALSPSLASAP). Ser-66 carries the post-translational modification Phosphoserine. The Nucleolar localization signal signature appears at 135–139 (HKLRR). The segment at 184-206 (YHCIICSATITRRTDMLGHVRRH) adopts a C2H2-type zinc-finger fold. The Trm1 methyltransferase domain maps to 227 to 688 (EILKEADTDV…APLMQFKSIL (462 aa)). Residues Arg-260, Asp-307, Asp-357, and Ala-358 each contribute to the S-adenosyl-L-methionine site. Cys-488, Cys-491, Cys-513, and Cys-515 together coordinate Zn(2+). Residue Lys-585 forms a Glycyl lysine isopeptide (Lys-Gly) (interchain with G-Cter in SUMO2) linkage. Phosphoserine occurs at positions 612 and 707.

It belongs to the class I-like SAM-binding methyltransferase superfamily. Trm1 family. In terms of tissue distribution, widely expressed.

It is found in the nucleus. The protein resides in the nucleolus. It catalyses the reaction guanosine(27) in tRNA(Tyr) + 2 S-adenosyl-L-methionine = N(2)-dimethylguanosine(27) in tRNA(Tyr) + 2 S-adenosyl-L-homocysteine + 2 H(+). Functionally, specifically dimethylates a single guanine residue at position 27 of tRNA(Tyr) using S-adenosyl-L-methionine as donor of the methyl groups. Dimethylation at position 27 of tRNA(Tyr) is required for efficient translation of tyrosine codons. Also required to maintain 3-(3-amino-3-carboxypropyl)uridine (acp3U) in the D-loop of several cytoplasmic tRNAs. The chain is tRNA (guanine(27)-N(2))-dimethyltransferase from Homo sapiens (Human).